The following is a 561-amino-acid chain: Phosphoinositide phospholipase C 1 (561 aa).

One can recognise an EF-hand domain in the interval 21 to 54 (EPPEEIKNLFHDYSQDDRMSADEMLRFVIQVQGE). In terms of domain architecture, PI-PLC X-box spans 105 to 249 (QDMNQPLSHY…LKNKILISTK (145 aa)). Catalysis depends on residues histidine 120 and histidine 166. The span at 256-266 (QTQISKGSTTD) shows a compositional bias: polar residues. Positions 256–285 (QTQISKGSTTDESTRAKKISDAEEQVQEED) are disordered. Positions 267-276 (ESTRAKKISD) are enriched in basic and acidic residues. The PI-PLC Y-box domain occupies 294–410 (RDLISIHAGN…GYVKKPDVLL (117 aa)). The C2 domain maps to 414–541 (PEGEIFDPCS…PGIRAVRLHD (128 aa)). Ca(2+) contacts are provided by aspartate 452, aspartate 458, aspartate 510, aspartate 512, and aspartate 518.

The cofactor is Ca(2+). In terms of tissue distribution, expressed in stems, leaves, roots, flowers and siliques. Predominant in the vascular tissues of roots and leaves.

It is found in the cell membrane. It carries out the reaction a 1,2-diacyl-sn-glycero-3-phospho-(1D-myo-inositol-4,5-bisphosphate) + H2O = 1D-myo-inositol 1,4,5-trisphosphate + a 1,2-diacyl-sn-glycerol + H(+). Its function is as follows. The production of the second messenger molecules diacylglycerol (DAG) and inositol 1,4,5-trisphosphate (IP3) is mediated by activated phosphatidylinositol-specific phospholipase C enzymes. Required for secondary responses to abscisic acid signals. The sequence is that of Phosphoinositide phospholipase C 1 (PLC1) from Arabidopsis thaliana (Mouse-ear cress).